Consider the following 126-residue polypeptide: Aspartate 1-decarboxylase (126 aa).

Serine 25 (schiff-base intermediate with substrate; via pyruvic acid) is an active-site residue. A Pyruvic acid (Ser) modification is found at serine 25. Residue threonine 57 participates in substrate binding. The active-site Proton donor is tyrosine 58. Residue 73–75 (GAA) participates in substrate binding.

This sequence belongs to the PanD family. As to quaternary structure, heterooctamer of four alpha and four beta subunits. The cofactor is pyruvate. In terms of processing, is synthesized initially as an inactive proenzyme, which is activated by self-cleavage at a specific serine bond to produce a beta-subunit with a hydroxyl group at its C-terminus and an alpha-subunit with a pyruvoyl group at its N-terminus.

Its subcellular location is the cytoplasm. The catalysed reaction is L-aspartate + H(+) = beta-alanine + CO2. The protein operates within cofactor biosynthesis; (R)-pantothenate biosynthesis; beta-alanine from L-aspartate: step 1/1. Catalyzes the pyruvoyl-dependent decarboxylation of aspartate to produce beta-alanine. The sequence is that of Aspartate 1-decarboxylase from Acetivibrio thermocellus (strain ATCC 27405 / DSM 1237 / JCM 9322 / NBRC 103400 / NCIMB 10682 / NRRL B-4536 / VPI 7372) (Clostridium thermocellum).